The sequence spans 66 residues: Toxin Aah6 (66 aa).

The 64-residue stretch at 2–65 (RDGYVVKNGT…LYGDDGTYCS (64 aa)) folds into the LCN-type CS-alpha/beta domain. N-linked (GlcNAc...) asparagine glycosylation occurs at Asn-9. Intrachain disulfides connect Cys-13-Cys-64, Cys-17-Cys-40, Cys-26-Cys-45, and Cys-30-Cys-47.

Belongs to the long (4 C-C) scorpion toxin superfamily. Sodium channel inhibitor family. Beta subfamily. N-glycans are core-fucosylated, heterogeneous and short which could be the result of extensive trimming. As to expression, expressed by the venom gland.

The protein localises to the secreted. Functionally, beta toxins bind voltage-independently at site-4 of sodium channels and shift the voltage of activation toward more negative potentials thereby affecting sodium channel activation and promoting spontaneous and repetitive firing. This toxin is active only on insects. This toxin has very low anti-insect activity. This is Toxin Aah6 from Androctonus australis (Sahara scorpion).